The following is an 88-amino-acid chain: Conotoxin Gm9.1 (88 aa).

The first 27 residues, 1-27 (MHLSLARSAVLMLLLLFALGNFVVVQS), serve as a signal peptide directing secretion. Residues 28-58 (GLITRDVDNGQLTDNRRNLQTEWNPLSLFMS) constitute a propeptide that is removed on maturation. Cystine bridges form between C62–C76, C66–C78, and C72–C83. N87 carries the post-translational modification Asparagine amide.

The protein belongs to the conotoxin P superfamily. As to expression, expressed by the venom duct.

It localises to the secreted. Neurotoxin. In vivo, elicits 'spasmodic' symptomatology. This chain is Conotoxin Gm9.1, found in Conus gloriamaris (Glory-of-the-Sea cone).